The chain runs to 107 residues: TVYTVGDSAGWKVPFFGDVDYDWKWASNKTFHIGDVLVFKYDRRFHNVDKVTQKNYQSCNDTTPIASYNTGBBRINLKTVGQKYYICGVPKHCDLGQKVHINVTVRS.

One can recognise a Phytocyanin domain in the interval 1-105 (TVYTVGDSAG…GQKVHINVTV (105 aa)). Asparagine 28 carries N-linked (GlcNAc...) asparagine glycosylation. Histidine 46 serves as a coordination point for Cu cation. A disulfide bridge links cysteine 59 with cysteine 93. Asparagine 60 carries an N-linked (GlcNAc...) asparagine glycan. Cu cation contacts are provided by cysteine 87, histidine 92, and glutamine 97. Asparagine 102 carries an N-linked (GlcNAc...) asparagine glycan.

In Toxicodendron vernicifluum (Japanese lacquer tree), this protein is Stellacyanin.